Reading from the N-terminus, the 243-residue chain is Segregation and condensation protein A (243 aa).

It belongs to the ScpA family. Component of a cohesin-like complex composed of ScpA, ScpB and the Smc homodimer, in which ScpA and ScpB bind to the head domain of Smc. The presence of the three proteins is required for the association of the complex with DNA.

It localises to the cytoplasm. Participates in chromosomal partition during cell division. May act via the formation of a condensin-like complex containing Smc and ScpB that pull DNA away from mid-cell into both cell halves. The protein is Segregation and condensation protein A of Staphylococcus epidermidis (strain ATCC 35984 / DSM 28319 / BCRC 17069 / CCUG 31568 / BM 3577 / RP62A).